We begin with the raw amino-acid sequence, 327 residues long: GTPase Obg (327 aa).

Positions methionine 1–isoleucine 159 constitute an Obg domain. The OBG-type G domain occupies alanine 160 to serine 327. Residues glycine 166 to serine 173, phenylalanine 191 to asparagine 195, aspartate 212 to glycine 215, asparagine 279 to aspartate 282, and serine 308 to leucine 310 each bind GTP. Mg(2+) is bound by residues serine 173 and threonine 193.

The protein belongs to the TRAFAC class OBG-HflX-like GTPase superfamily. OBG GTPase family. In terms of assembly, monomer. Mg(2+) is required as a cofactor.

Its subcellular location is the cytoplasm. An essential GTPase which binds GTP, GDP and possibly (p)ppGpp with moderate affinity, with high nucleotide exchange rates and a fairly low GTP hydrolysis rate. Plays a role in control of the cell cycle, stress response, ribosome biogenesis and in those bacteria that undergo differentiation, in morphogenesis control. The sequence is that of GTPase Obg from Pelagibacter ubique (strain HTCC1062).